The following is a 360-amino-acid chain: Phospho-N-acetylmuramoyl-pentapeptide-transferase (360 aa).

A run of 10 helical transmembrane segments spans residues 25–45 (RGILGVLTALTLSLCLGPWMI), 73–93 (TMGGALILSSIGISTLLWADL), 97–117 (YVWVVLLVTFLFGAIGWVDDY), 135–155 (FWQSVFGLCAAIFLYTTAPSA), 170–190 (IPLGIGFIVLTYFVIVGSSNA), 199–219 (GLAIMPTVMVGGALGIFCYLS), 236–256 (AGELIVFSGALIGAGLGFLWF), 263–283 (VFMGDVGALALGAALGTMAVI), 288–308 (MVLFIMGGVFVMETLSVVIQV), and 338–358 (VIVRFWIITVILVLIGLATLK).

Belongs to the glycosyltransferase 4 family. MraY subfamily. The cofactor is Mg(2+).

The protein resides in the cell inner membrane. It catalyses the reaction UDP-N-acetyl-alpha-D-muramoyl-L-alanyl-gamma-D-glutamyl-meso-2,6-diaminopimeloyl-D-alanyl-D-alanine + di-trans,octa-cis-undecaprenyl phosphate = di-trans,octa-cis-undecaprenyl diphospho-N-acetyl-alpha-D-muramoyl-L-alanyl-D-glutamyl-meso-2,6-diaminopimeloyl-D-alanyl-D-alanine + UMP. Its pathway is cell wall biogenesis; peptidoglycan biosynthesis. Catalyzes the initial step of the lipid cycle reactions in the biosynthesis of the cell wall peptidoglycan: transfers peptidoglycan precursor phospho-MurNAc-pentapeptide from UDP-MurNAc-pentapeptide onto the lipid carrier undecaprenyl phosphate, yielding undecaprenyl-pyrophosphoryl-MurNAc-pentapeptide, known as lipid I. The polypeptide is Phospho-N-acetylmuramoyl-pentapeptide-transferase (Pseudomonas syringae pv. syringae (strain B728a)).